The primary structure comprises 530 residues: Portal protein B (530 aa).

The protein belongs to the siphoviridae portal protein family. In terms of assembly, homododecamer. Interacts with the terminase complex composed of two small and one large terminase subunits. In terms of processing, proteolytically cleaved by the viral protease during capsid maturation.

The protein localises to the virion. Forms the portal vertex of the capsid. This portal plays critical roles in head assembly, genome packaging, neck/tail attachment, and genome ejection. The portal protein multimerizes as a single ring-shaped homododecamer arranged around a central channel. Binds to the terminase subunits to form the packaging machine. This chain is Portal protein B, found in Enterobacteria phage P21 (Bacteriophage 21).